The following is a 70-amino-acid chain: MVCFLIYITLLFIQRVYFISSEKKLTIHIVQMFQLLSQAFYNLKMFLMMDMLGVGDAININTNKNIRQVC.

This is an uncharacterized protein from Escherichia coli (strain K12).